The sequence spans 494 residues: Protein STN1 (494 aa).

The OB DNA-binding region spans 62-159; the sequence is MLFWKNHPLQ…YQELQVEYLR (98 aa). Winged helix-turn-helix (wHTH) regions lie at residues 311 to 397 and 396 to 494; these read NRTS…ETFD and FDLL…AAYS.

Interacts with CDC13 and TEN1.

It localises to the chromosome. The protein localises to the telomere. Functionally, has a role in telomere length regulation and telomere end protection. Acts as an inhibitor of telomerase loading through its interaction with CDC13. This Saccharomyces cerevisiae (strain ATCC 204508 / S288c) (Baker's yeast) protein is Protein STN1 (STN1).